The primary structure comprises 225 residues: Isoprenyl transferase 1 (225 aa).

Residue Asp3 is part of the active site. Mg(2+) is bound at residue Asp3. Residues 4–7, Trp8, His21, and 49–51 contribute to the substrate site; these read GNRR and SME. Asn52 acts as the Proton acceptor in catalysis. Substrate is bound by residues Arg55, Arg174, and 180–182; that span reads RLS. Glu193 is a Mg(2+) binding site.

Belongs to the UPP synthase family. In terms of assembly, homodimer. Requires Mg(2+) as cofactor.

Functionally, catalyzes the condensation of isopentenyl diphosphate (IPP) with allylic pyrophosphates generating different type of terpenoids. The protein is Isoprenyl transferase 1 of Corynebacterium glutamicum (strain ATCC 13032 / DSM 20300 / JCM 1318 / BCRC 11384 / CCUG 27702 / LMG 3730 / NBRC 12168 / NCIMB 10025 / NRRL B-2784 / 534).